We begin with the raw amino-acid sequence, 401 residues long: Mu-type opioid receptor (401 aa).

Residues 1–69 are Extracellular-facing; it reads MDSGAVPTNA…CPSAGSPSMI (69 aa). 5 N-linked (GlcNAc...) asparagine glycosylation sites follow: Asn9, Asn12, Asn34, Asn41, and Asn49. The chain crosses the membrane as a helical span at residues 70–94; the sequence is TAIIIMALYSIVCVVGLFGNFLVMY. The Cytoplasmic segment spans residues 95–107; that stretch reads VIVRYTKMKTATN. A helical membrane pass occupies residues 108-132; sequence IYIFNLALADALATSTLPFQSVNYL. Over 133 to 143 the chain is Extracellular; it reads MGTWPFGTILC. Cys143 and Cys220 form a disulfide bridge. Residues 144–166 form a helical membrane-spanning segment; that stretch reads KIVISIDYYNMFTSIFTLCTMSV. Residues 167–186 lie on the Cytoplasmic side of the membrane; it reads DRYIAVCHPVKALDLRTPRN. A Phosphotyrosine modification is found at Tyr169. The chain crosses the membrane as a helical span at residues 187–208; sequence AKIINICNWILSSAIGLPVMFM. Topologically, residues 209 to 231 are extracellular; it reads ATTKYRQGSIDCTLTFSHPTWYW. The chain crosses the membrane as a helical span at residues 232 to 256; it reads ENLLKICVFIFAFIMPILIITVCYG. Over 257–280 the chain is Cytoplasmic; the sequence is LMILRLKSVRMLSGSKEKDRNLRR. A helical membrane pass occupies residues 281–307; it reads ITRMVLVVVAVFIVCWTPIHIYVIIKA. Residues 308 to 315 are Extracellular-facing; it reads LITIPETT. The helical transmembrane segment at 316–339 threads the bilayer; the sequence is FQTVSWHFCIALGYTNSCLNPVLY. The NPxxY; plays a role in stabilizing the activated conformation of the receptor signature appears at 335-339; it reads NPVLY. Over 340-401 the chain is Cytoplasmic; sequence AFLDENFKRC…NLEAETTPLP (62 aa). Cys354 is lipidated: S-palmitoyl cysteine. The tract at residues 365-389 is disordered; that stretch reads NSTRIRQNTRDHPSTANTVDRTNHQ. At Ser366 the chain carries Phosphoserine. Thr373 carries the post-translational modification Phosphothreonine. At Ser378 the chain carries Phosphoserine. A Phosphothreonine modification is found at Thr397.

This sequence belongs to the G-protein coupled receptor 1 family. In terms of assembly, forms homooligomers and heterooligomers with other GPCRs, such as OPRD1, OPRK1, OPRL1, NPFFR2, ADRA2A, SSTR2, CNR1 and CCR5 (probably in dimeric forms). Interacts with heterotrimeric G proteins; interaction with a heterotrimeric complex containing GNAI1, GNB1 and GNG2 stabilizes the active conformation of the receptor and increases its affinity for endomorphin-2, the synthetic opioid peptide DAMGO and for morphinan agonists. Interacts with PPL; the interaction disrupts agonist-mediated G-protein activation. Interacts (via C-terminus) with DNAJB4 (via C-terminus). Interacts with calmodulin; the interaction inhibits the constitutive activity of OPRM1; it abolishes basal and attenuates agonist-stimulated G-protein coupling. Interacts with FLNA, PLD2, RANBP9 and WLS and GPM6A. Interacts with RTP4. Interacts with SYP and GNAS. Interacts with RGS9, RGS17, RGS20, RGS4, PPP1R9B and HINT1. Phosphorylated. Differentially phosphorylated in basal and agonist-induced conditions. Agonist-mediated phosphorylation modulates receptor internalization. Phosphorylated by GRK2 in a agonist-dependent manner. Phosphorylation at Tyr-169 requires receptor activation, is dependent on non-receptor protein tyrosine kinase Src and results in a decrease in agonist efficacy by reducing G-protein coupling efficiency. Phosphorylated on tyrosine residues; the phosphorylation is involved in agonist-induced G-protein-independent receptor down-regulation. Phosphorylation at Ser-378 is involved in G-protein-dependent but not beta-arrestin-dependent activation of the ERK pathway. In terms of processing, ubiquitinated. A basal ubiquitination seems not to be related to degradation. Ubiquitination is increased upon formation of OPRM1:OPRD1 oligomers leading to proteasomal degradation; the ubiquitination is diminished by RTP4.

It is found in the cell membrane. The protein resides in the cell projection. The protein localises to the axon. It localises to the perikaryon. Its subcellular location is the dendrite. It is found in the endosome. Its function is as follows. Receptor for endogenous opioids such as beta-endorphin and endomorphin. Receptor for natural and synthetic opioids including morphine, heroin, DAMGO, fentanyl, etorphine, buprenorphin and methadone. Also activated by enkephalin peptides, such as Met-enkephalin or Met-enkephalin-Arg-Phe, with higher affinity for Met-enkephalin-Arg-Phe. Agonist binding to the receptor induces coupling to an inactive GDP-bound heterotrimeric G-protein complex and subsequent exchange of GDP for GTP in the G-protein alpha subunit leading to dissociation of the G-protein complex with the free GTP-bound G-protein alpha and the G-protein beta-gamma dimer activating downstream cellular effectors. The agonist- and cell type-specific activity is predominantly coupled to pertussis toxin-sensitive G(i) and G(o) G alpha proteins, GNAI1, GNAI2, GNAI3 and GNAO1, and to a lesser extent to pertussis toxin-insensitive G alpha proteins GNAZ and GNA15. They mediate an array of downstream cellular responses, including inhibition of adenylate cyclase activity and both N-type and L-type calcium channels, activation of inward rectifying potassium channels, mitogen-activated protein kinase (MAPK), phospholipase C (PLC), phosphoinositide/protein kinase (PKC), phosphoinositide 3-kinase (PI3K) and regulation of NF-kappa-B. Also couples to adenylate cyclase stimulatory G alpha proteins. The selective temporal coupling to G-proteins and subsequent signaling can be regulated by RGSZ proteins, such as RGS9, RGS17 and RGS4. Phosphorylation by members of the GPRK subfamily of Ser/Thr protein kinases and association with beta-arrestins is involved in short-term receptor desensitization. Beta-arrestins associate with the GPRK-phosphorylated receptor and uncouple it from the G-protein thus terminating signal transduction. The phosphorylated receptor is internalized through endocytosis via clathrin-coated pits which involves beta-arrestins. The activation of the ERK pathway occurs either in a G-protein-dependent or a beta-arrestin-dependent manner and is regulated by agonist-specific receptor phosphorylation. Acts as a class A G-protein coupled receptor (GPCR) which dissociates from beta-arrestin at or near the plasma membrane and undergoes rapid recycling. Receptor down-regulation pathways are varying with the agonist and occur dependent or independent of G-protein coupling. Endogenous ligands induce rapid desensitization, endocytosis and recycling. Heterooligomerization with other GPCRs can modulate agonist binding, signaling and trafficking properties. Involved in neurogenesis. The sequence is that of Mu-type opioid receptor (OPRM1) from Bos taurus (Bovine).